Consider the following 250-residue polypeptide: Uracil-DNA glycosylase (250 aa).

The active-site Proton acceptor is the aspartate 78. Residues 228 to 250 (RGQKPVDWSGEQNNASRQGEFAL) are disordered.

This sequence belongs to the uracil-DNA glycosylase (UDG) superfamily. UNG family.

It is found in the cytoplasm. It carries out the reaction Hydrolyzes single-stranded DNA or mismatched double-stranded DNA and polynucleotides, releasing free uracil.. In terms of biological role, excises uracil residues from the DNA which can arise as a result of misincorporation of dUMP residues by DNA polymerase or due to deamination of cytosine. The protein is Uracil-DNA glycosylase of Bordetella pertussis (strain Tohama I / ATCC BAA-589 / NCTC 13251).